Consider the following 281-residue polypeptide: Arabinooligosaccharides transport system permease protein AraQ (281 aa).

Transmembrane regions (helical) follow at residues 15-35, 81-101, 112-132, 142-162, 185-205, and 247-267; these read LTLF…CLLL, LVLG…IGYG, IIFV…MLPL, IDSY…VFFF, FGIF…AMII, and MLIS…LFFQ. In terms of domain architecture, ABC transmembrane type-1 spans 77 to 266; that stretch reads FFNSLVLGLF…LPVIIIFLFF (190 aa).

Belongs to the binding-protein-dependent transport system permease family. MalFG subfamily. As to quaternary structure, the complex is composed of two ATP-binding proteins (MsmX), two transmembrane proteins (AraP and AraQ) and a solute-binding protein (AraN).

It is found in the cell membrane. Functionally, part of the ABC transporter complex AraNPQ involved in the uptake of arabinooligosaccharides. Transports alpha-1,5-arabinooligosaccharides, at least up to four L-arabinosyl units. Responsible for the translocation of the substrate across the membrane. In Bacillus subtilis (strain 168), this protein is Arabinooligosaccharides transport system permease protein AraQ.